The primary structure comprises 53 residues: uncharacterized protein (53 aa).

It localises to the mitochondrion. This is an uncharacterized protein from Saccharomyces cerevisiae (strain ATCC 204508 / S288c) (Baker's yeast).